Reading from the N-terminus, the 204-residue chain is Small ribosomal subunit protein uS4 (204 aa).

A disordered region spans residues 25–47 (SPVNKREYGPGQHGQRRKKPSDY). The S4 RNA-binding domain occupies 93-156 (RRLDAVVYRM…KQFAFVMEAA (64 aa)).

This sequence belongs to the universal ribosomal protein uS4 family. As to quaternary structure, part of the 30S ribosomal subunit. Contacts protein S5. The interaction surface between S4 and S5 is involved in control of translational fidelity.

Functionally, one of the primary rRNA binding proteins, it binds directly to 16S rRNA where it nucleates assembly of the body of the 30S subunit. In terms of biological role, with S5 and S12 plays an important role in translational accuracy. The polypeptide is Small ribosomal subunit protein uS4 (Rhodospirillum centenum (strain ATCC 51521 / SW)).